The chain runs to 341 residues: Thiamine-phosphate synthase (341 aa).

Positions 1 to 123 (MAVVEEQVVL…AAAAKEWRYR (123 aa)) are unknown. The interval 61 to 80 (AARDTPHDPGTGLEHPDEGV) is disordered. The segment at 124–341 (VYTLESTATG…AWFLERLNRG (218 aa)) is thiamine-phosphate synthase. 4-amino-2-methyl-5-(diphosphooxymethyl)pyrimidine-binding positions include 171 to 175 (QLREK) and Asn203. Residues Asp204 and Asp223 each coordinate Mg(2+). 4-amino-2-methyl-5-(diphosphooxymethyl)pyrimidine is bound at residue Ser242. Position 268 to 270 (268 to 270 (TPT)) interacts with 2-[(2R,5Z)-2-carboxy-4-methylthiazol-5(2H)-ylidene]ethyl phosphate. Lys271 lines the 4-amino-2-methyl-5-(diphosphooxymethyl)pyrimidine pocket. Residue Gly298 participates in 2-[(2R,5Z)-2-carboxy-4-methylthiazol-5(2H)-ylidene]ethyl phosphate binding.

The protein belongs to the thiamine-phosphate synthase family. Mg(2+) is required as a cofactor.

The catalysed reaction is 2-[(2R,5Z)-2-carboxy-4-methylthiazol-5(2H)-ylidene]ethyl phosphate + 4-amino-2-methyl-5-(diphosphooxymethyl)pyrimidine + 2 H(+) = thiamine phosphate + CO2 + diphosphate. It catalyses the reaction 2-(2-carboxy-4-methylthiazol-5-yl)ethyl phosphate + 4-amino-2-methyl-5-(diphosphooxymethyl)pyrimidine + 2 H(+) = thiamine phosphate + CO2 + diphosphate. The enzyme catalyses 4-methyl-5-(2-phosphooxyethyl)-thiazole + 4-amino-2-methyl-5-(diphosphooxymethyl)pyrimidine + H(+) = thiamine phosphate + diphosphate. Its pathway is cofactor biosynthesis; thiamine diphosphate biosynthesis; thiamine phosphate from 4-amino-2-methyl-5-diphosphomethylpyrimidine and 4-methyl-5-(2-phosphoethyl)-thiazole: step 1/1. Condenses 4-methyl-5-(beta-hydroxyethyl)thiazole monophosphate (THZ-P) and 2-methyl-4-amino-5-hydroxymethyl pyrimidine pyrophosphate (HMP-PP) to form thiamine monophosphate (TMP). The protein is Thiamine-phosphate synthase of Gloeobacter violaceus (strain ATCC 29082 / PCC 7421).